Here is a 138-residue protein sequence, read N- to C-terminus: Translation initiation factor 2 subunit beta (138 aa).

This sequence belongs to the eIF-2-beta/eIF-5 family. In terms of assembly, heterotrimer composed of an alpha, a beta and a gamma chain.

Functionally, eIF-2 functions in the early steps of protein synthesis by forming a ternary complex with GTP and initiator tRNA. The protein is Translation initiation factor 2 subunit beta of Methanococcus maripaludis (strain C6 / ATCC BAA-1332).